Here is a 165-residue protein sequence, read N- to C-terminus: Protein phosphatase 1 regulatory subunit 14C (165 aa).

Residues 1-12 (MSVATGSSETAG) are compositionally biased toward low complexity. The interval 1-73 (MSVATGSSET…QRRHQQGKVT (73 aa)) is disordered. Ser2 carries the post-translational modification N-acetylserine. Ser25 is subject to Phosphoserine. Arg27 carries the post-translational modification Omega-N-methylarginine. Ser33 is modified (phosphoserine). The segment covering 35 to 63 (GSSSGSGSSREDSAPVATAAAAGQVQQQQ) has biased composition (low complexity). Thr73 bears the Phosphothreonine; by ILK1 mark.

Belongs to the PP1 inhibitor family. Post-translationally, has over 600-fold higher inhibitory activity when phosphorylated, creating a molecular switch for regulating the phosphorylation status of PPP1CA substrates and smooth muscle contraction. The main inhibitory site appears to be Thr-73. In terms of tissue distribution, detected in breast cancer.

It is found in the cytoplasm. The protein localises to the membrane. Inhibitor of the PP1 regulatory subunit PPP1CA. The chain is Protein phosphatase 1 regulatory subunit 14C (PPP1R14C) from Homo sapiens (Human).